Consider the following 261-residue polypeptide: 5'-nucleotidase SurE (261 aa).

A divalent metal cation contacts are provided by aspartate 8, aspartate 9, serine 39, and asparagine 91.

It belongs to the SurE nucleotidase family. The cofactor is a divalent metal cation.

The protein localises to the cytoplasm. The catalysed reaction is a ribonucleoside 5'-phosphate + H2O = a ribonucleoside + phosphate. Its function is as follows. Nucleotidase that shows phosphatase activity on nucleoside 5'-monophosphates. In Polaromonas sp. (strain JS666 / ATCC BAA-500), this protein is 5'-nucleotidase SurE.